The following is a 105-amino-acid chain: ATP-dependent Clp protease adapter protein ClpS (105 aa).

The segment at 1–27 is disordered; the sequence is MVVMSAPTEPKSRPGTTGQRESAPEDV.

This sequence belongs to the ClpS family. Binds to the N-terminal domain of the chaperone ClpA.

Involved in the modulation of the specificity of the ClpAP-mediated ATP-dependent protein degradation. The chain is ATP-dependent Clp protease adapter protein ClpS from Mycolicibacterium paratuberculosis (strain ATCC BAA-968 / K-10) (Mycobacterium paratuberculosis).